The primary structure comprises 553 residues: Phospholipase B-like 1 (553 aa).

Positions 1 to 38 are cleaved as a signal peptide; that stretch reads MTRGGPGGRPGLPQPPPLLLLLLLLPLLLVTAEPPKPA. N-linked (GlcNAc...) (high mannose) asparagine; alternate glycosylation occurs at N71. N71 is a glycosylation site (N-linked (GlcNAc...) (hybrid) asparagine; alternate). The propeptide at 209–227 is removed in mature form; sequence LSPTKNGSLKVFKRWDMGH. N-linked (GlcNAc...) (high mannose) asparagine; alternate glycosylation is found at N308 and N366. Residues N308 and N366 are each glycosylated (N-linked (GlcNAc...) (hybrid) asparagine; alternate). N411 carries an N-linked (GlcNAc...) asparagine glycan. 2 disulfide bridges follow: C470-C475 and C474-C489. An N-linked (GlcNAc...) (high mannose) asparagine; alternate glycan is attached at N526. N-linked (GlcNAc...) (hybrid) asparagine; alternate glycosylation is present at N526.

Belongs to the phospholipase B-like family. As to quaternary structure, may form a homodimer, each monomer is composed of a chain A and a chain B. The maturation cleavages that produces chains A and B are required to open the putative substrate binding pocket. Both chains A and B remain associated in the mature protein. As to expression, expressed in neutrophils and monocytes.

The protein resides in the lysosome. Its function is as follows. In view of the small size of the putative binding pocket, it has been proposed that it may act as an amidase or a peptidase. Exhibits a weak phospholipase activity, acting on various phospholipids, including phosphatidylcholine, phosphatidylinositol, phosphatidylethanolamine and lysophospholipids. The chain is Phospholipase B-like 1 (PLBD1) from Homo sapiens (Human).